The primary structure comprises 189 residues: MILIIDNYDSFTYNLAQCVGELGHDVLVCRNDEIDVVKIKKLNPEKIIISPGPGKPTESGISLDVISSLAEYIPILGVCLGHQSIGYINGGSIIKVPKIMHGKTSQIYHDREDLFINLPNPFIATRYHSLIIDRANFPTNLAVTAWTDNNIIMACRHKHYKMLRGIQFHPESLWTVCGQQLLKNFLDSD.

Positions Met1–Asp189 constitute a Glutamine amidotransferase type-1 domain. Gly52–Gly54 lines the L-glutamine pocket. Cys79 serves as the catalytic Nucleophile; for GATase activity. L-glutamine is bound by residues Gln83 and Ser129–Leu130. Residues His169 and Glu171 contribute to the active site.

As to quaternary structure, tetramer of two components I and two components II.

The protein localises to the plastid. The protein resides in the chloroplast. It carries out the reaction chorismate + L-glutamine = anthranilate + pyruvate + L-glutamate + H(+). It functions in the pathway amino-acid biosynthesis; L-tryptophan biosynthesis; L-tryptophan from chorismate: step 1/5. The protein is Anthranilate synthase component 2 (trpG) of Porphyra purpurea (Red seaweed).